Consider the following 97-residue polypeptide: Large ribosomal subunit protein bL28 (97 aa).

A disordered region spans residues 1-20; it reads MSRRCELTAKGPQVGHKVSH.

It belongs to the bacterial ribosomal protein bL28 family.

This Afipia carboxidovorans (strain ATCC 49405 / DSM 1227 / KCTC 32145 / OM5) (Oligotropha carboxidovorans) protein is Large ribosomal subunit protein bL28.